A 226-amino-acid chain; its full sequence is Uridylate kinase (226 aa).

9-13 (KVSGK) serves as a coordination point for ATP. A UMP-binding site is contributed by glycine 46. 2 residues coordinate ATP: glycine 47 and arginine 51. UMP-binding positions include aspartate 68 and 116-122 (FQPGQST). The ATP site is built by threonine 142, tyrosine 148, and aspartate 151.

It belongs to the UMP kinase family. In terms of assembly, homohexamer.

The protein localises to the cytoplasm. The enzyme catalyses UMP + ATP = UDP + ADP. It functions in the pathway pyrimidine metabolism; CTP biosynthesis via de novo pathway; UDP from UMP (UMPK route): step 1/1. Inhibited by UTP. Its function is as follows. Catalyzes the reversible phosphorylation of UMP to UDP. The protein is Uridylate kinase of Hyperthermus butylicus (strain DSM 5456 / JCM 9403 / PLM1-5).